The following is a 361-amino-acid chain: Homer protein homolog 3 (361 aa).

The segment at 1–80 (MSTAREQPIF…TKTSQKFGQW (80 aa)) is required for interaction with NFATC2. The WH1 domain occupies 1–113 (MSTAREQPIF…EKFQEVKEAA (113 aa)). Residues 114 to 169 (RLAREKSQDGGELTSPALGLASHQVPPSPLVSANGPGEEKLFRSQSADAPGPTERE) form a disordered region. S120 and S159 each carry phosphoserine. Coiled-coil stretches lie at residues 191–243 (ALQD…SEVT) and 254–358 (GQSL…RLAE).

This sequence belongs to the Homer family. As to quaternary structure, tetramer. Isoform 1 and isoform 2 encode coiled-coil structures that mediate homo- and heteromultimerization. Interacts with NFATC2; interaction is calcium independent; interaction competes with PPP3CA for NFATC2 binding; interaction is reduced by AKT activation. Interacts with NFATC1 and NFATC4. Interacts with SHANK1; forms a high-order complex at least composed of SHANK1 and HOMER3; the complex formation is regulated by CAMK2A-mediated phosphorylation.

The protein localises to the cytoplasm. It is found in the postsynaptic density. Its subcellular location is the synapse. Functionally, postsynaptic density scaffolding protein. Binds and cross-links cytoplasmic regions of GRM1, GRM5, ITPR1, DNM3, RYR1, RYR2, SHANK1 and SHANK3. By physically linking GRM1 and GRM5 with ER-associated ITPR1 receptors, it aids the coupling of surface receptors to intracellular calcium release. Isoforms can be differently regulated and may play an important role in maintaining the plasticity at glutamatergic synapses. Negatively regulates T cell activation by inhibiting the calcineurin-NFAT pathway. Acts by competing with calcineurin/PPP3CA for NFAT protein binding, hence preventing NFAT activation by PPP3CA. This chain is Homer protein homolog 3, found in Homo sapiens (Human).